Here is a 361-residue protein sequence, read N- to C-terminus: MDVAALVSGGVDSSVVVHRLCEEGYKPAIFYIRIGMEDKDGYIDCPAEEDIELTTLIARRYGCPFEVVDLHKEYWERVVSYTVETVRRGLTPNPDMMCNKLIKFGCFEERWGYQFDRIATGHYATTDLLNGKTYLSTAKDPVKDQTDFLAQINFAQISKLMFPIGHLLKSEVRAIANAAGLPSAKRKDSQGICFLGKIDYNDFIERYLGKKEGRIIELETGKVIGRHQGYWFHTIGQRKGLGLSGGPWFVVKKDIKRNIILVSRGYDPDAQYGKTIEMETFDFITEDAYEAGYWNREDATPVTFKIRHTPEFTRGLLYKGEKGYRLESEERIQGIAPGQYCVIYDEDHHLCYGSGMITKGR.

Residues 6 to 13 and I32 contribute to the ATP site; that span reads LVSGGVDS. Positions 93-95 are interaction with target base in tRNA; the sequence is NPD. Catalysis depends on C98, which acts as the Nucleophile. An intrachain disulfide couples C98 to C193. G121 lines the ATP pocket. The interval 143–145 is interaction with tRNA; that stretch reads KDQ. Catalysis depends on C193, which acts as the Cysteine persulfide intermediate.

It belongs to the MnmA/TRMU family.

The protein localises to the cytoplasm. The catalysed reaction is S-sulfanyl-L-cysteinyl-[protein] + uridine(34) in tRNA + AH2 + ATP = 2-thiouridine(34) in tRNA + L-cysteinyl-[protein] + A + AMP + diphosphate + H(+). Functionally, catalyzes the 2-thiolation of uridine at the wobble position (U34) of tRNA, leading to the formation of s(2)U34. The sequence is that of tRNA-specific 2-thiouridylase MnmA from Porphyromonas gingivalis (strain ATCC BAA-308 / W83).